Reading from the N-terminus, the 138-residue chain is Phospholipase A2 homolog mojave toxin acidic chain (138 aa).

A signal peptide spans 1 to 40; the sequence is MRALWIVAVLLVGVEGSLVEFETLIMKIAGRSGISYYSSY. 7 disulfides stabilise this stretch: Cys42–Cys131, Cys44–Cys60, Cys59–Cys111, Cys65–Cys138, Cys66–Cys104, Cys73–Cys97, and Cys91–Cys102. A propeptide spanning residues 81 to 83 is cleaved from the precursor; sequence TYR. Gln84 carries the pyrrolidone carboxylic acid modification. Residues 120–126 constitute a propeptide that is removed on maturation; it reads DYKYLRF.

The protein belongs to the phospholipase A2 family. Group II subfamily. D49 sub-subfamily. As to quaternary structure, heterodimer of an acidic and a basic chain. The acidic subunit is non-toxic, without enzymatic activity and comprises 3 peptides that are cross-linked by 5 disulfide bridges. The basic subunit is toxic, has phospholipase A2 activity and is composed of a single chain. It depends on Ca(2+) as a cofactor. As to expression, expressed by the venom gland.

Its subcellular location is the secreted. Snake venom phospholipase A2 (PLA2) that inhibits neuromuscular transmission by blocking acetylcholine release from the nerve termini. The protein is Phospholipase A2 homolog mojave toxin acidic chain of Crotalus scutulatus scutulatus (Mojave rattlesnake).